The sequence spans 728 residues: Protein psiK (728 aa).

The N-terminal stretch at 1 to 20 (MKKTFIFLYCVVLFISTTLA) is a signal peptide. At 21 to 666 (VEMKKTQDFN…FICKTAAVVS (646 aa)) the chain is on the extracellular side. Residues N61, N74, and N104 are each glycosylated (N-linked (GlcNAc...) asparagine). The 149-residue stretch at 118–266 (MNLDDKSNYF…YDFCGVCTGN (149 aa)) folds into the PA14 domain. 6 N-linked (GlcNAc...) asparagine glycosylation sites follow: N272, N326, N335, N438, N543, and N638. The chain crosses the membrane as a helical span at residues 667-687 (VGVAVGVAVGGAIALGVFIFA). Over 688-728 (GKKGYDYWKASQGVTMATSNANPLYESNPSGGENPIYTSPN) the chain is Cytoplasmic.

The protein belongs to the prespore-cell-inducing factor family.

It is found in the membrane. This chain is Protein psiK (psiK), found in Dictyostelium discoideum (Social amoeba).